We begin with the raw amino-acid sequence, 337 residues long: tRNA N6-adenosine threonylcarbamoyltransferase (337 aa).

The Fe cation site is built by H111 and H115. Residues 134 to 138 (LVSGG), D167, G180, and N272 each bind substrate. D300 provides a ligand contact to Fe cation.

Belongs to the KAE1 / TsaD family. Fe(2+) is required as a cofactor.

The protein localises to the cytoplasm. It carries out the reaction L-threonylcarbamoyladenylate + adenosine(37) in tRNA = N(6)-L-threonylcarbamoyladenosine(37) in tRNA + AMP + H(+). Functionally, required for the formation of a threonylcarbamoyl group on adenosine at position 37 (t(6)A37) in tRNAs that read codons beginning with adenine. Is involved in the transfer of the threonylcarbamoyl moiety of threonylcarbamoyl-AMP (TC-AMP) to the N6 group of A37, together with TsaE and TsaB. TsaD likely plays a direct catalytic role in this reaction. The protein is tRNA N6-adenosine threonylcarbamoyltransferase of Methylococcus capsulatus (strain ATCC 33009 / NCIMB 11132 / Bath).